The following is a 443-amino-acid chain: ATP-dependent protease ATPase subunit HslU (443 aa).

ATP is bound by residues isoleucine 18, 60-65, aspartate 256, glutamate 321, and arginine 393; that span reads GVGKTE.

This sequence belongs to the ClpX chaperone family. HslU subfamily. As to quaternary structure, a double ring-shaped homohexamer of HslV is capped on each side by a ring-shaped HslU homohexamer. The assembly of the HslU/HslV complex is dependent on binding of ATP.

The protein resides in the cytoplasm. In terms of biological role, ATPase subunit of a proteasome-like degradation complex; this subunit has chaperone activity. The binding of ATP and its subsequent hydrolysis by HslU are essential for unfolding of protein substrates subsequently hydrolyzed by HslV. HslU recognizes the N-terminal part of its protein substrates and unfolds these before they are guided to HslV for hydrolysis. The chain is ATP-dependent protease ATPase subunit HslU from Edwardsiella ictaluri (strain 93-146).